The following is a 342-amino-acid chain: tRNA N6-adenosine threonylcarbamoyltransferase (342 aa).

Fe cation contacts are provided by histidine 111 and histidine 115. Substrate-binding positions include 134-138, aspartate 167, glycine 180, and asparagine 276; that span reads LVSGG. Fe cation is bound at residue aspartate 304.

It belongs to the KAE1 / TsaD family. It depends on Fe(2+) as a cofactor.

The protein localises to the cytoplasm. It catalyses the reaction L-threonylcarbamoyladenylate + adenosine(37) in tRNA = N(6)-L-threonylcarbamoyladenosine(37) in tRNA + AMP + H(+). In terms of biological role, required for the formation of a threonylcarbamoyl group on adenosine at position 37 (t(6)A37) in tRNAs that read codons beginning with adenine. Is involved in the transfer of the threonylcarbamoyl moiety of threonylcarbamoyl-AMP (TC-AMP) to the N6 group of A37, together with TsaE and TsaB. TsaD likely plays a direct catalytic role in this reaction. The sequence is that of tRNA N6-adenosine threonylcarbamoyltransferase from Helicobacter acinonychis (strain Sheeba).